The chain runs to 319 residues: MMVLKVEELVTGKKNGGGDAGEFLPEDFRDGEYEAAVTLEKQEDLKTLPAHFVSLGEQQWKIEKEREAELKKKKLEQRSKLENLEDLEIIIQLKKRKKYRKTKVPVVKEPEPEVITEPVDVPRFLKAALENKLPVVEKFLSDKNNPDVCDEYKRTALHRACLEGHLAIVEKLIEAGAQIEFRDMLESTAIHWASRGGNLDVLKLLLNKGAKISARDKLLSTALHVAVRTGHYECAEHLIACEADLNAKDREGDTPLHDAVRLNRYKMIRLLITYGADLNVKNCAGKTPMDLVLNWQNGTKAIFDSLKENSYKASRIATF.

Residues 63-89 adopt a coiled-coil conformation; it reads EKEREAELKKKKLEQRSKLENLEDLEI. ANK repeat units lie at residues 152–181, 185–214, 218–247, 251–280, and 284–315; these read YKRT…QIEF, LEST…KISA, LLST…DLNA, EGDT…DLNV, and AGKT…KASR.

Interacts with TTN/titin and YBX1. Expressed in heart. In postnatal neonatal heart, it is expressed in an asymmetrical way; left ventricle favored towards right ventricle. Whether or not this could be correlated with a hypertrophic heart is still a matter of debate. Levels increase gradually from newborn to adult.

The protein localises to the nucleus. Functionally, may play an important role in endothelial cell activation. May act as a nuclear transcription factor that negatively regulates the expression of cardiac genes. The chain is Ankyrin repeat domain-containing protein 1 (ANKRD1) from Sus scrofa (Pig).